The sequence spans 958 residues: Valine--tRNA ligase (958 aa).

The short motif at proline 45–histidine 55 is the 'HIGH' region element. Residues lysine 571–serine 575 carry the 'KMSKS' region motif. An ATP-binding site is contributed by lysine 574. A coiled-coil region spans residues alanine 892–serine 958.

Belongs to the class-I aminoacyl-tRNA synthetase family. ValS type 1 subfamily. Monomer.

The protein resides in the cytoplasm. It catalyses the reaction tRNA(Val) + L-valine + ATP = L-valyl-tRNA(Val) + AMP + diphosphate. Its function is as follows. Catalyzes the attachment of valine to tRNA(Val). As ValRS can inadvertently accommodate and process structurally similar amino acids such as threonine, to avoid such errors, it has a 'posttransfer' editing activity that hydrolyzes mischarged Thr-tRNA(Val) in a tRNA-dependent manner. This is Valine--tRNA ligase from Bradyrhizobium diazoefficiens (strain JCM 10833 / BCRC 13528 / IAM 13628 / NBRC 14792 / USDA 110).